We begin with the raw amino-acid sequence, 1142 residues long: Zinc finger MYM-type protein 1 (1142 aa).

A Glycyl lysine isopeptide (Lys-Gly) (interchain with G-Cter in SUMO2) cross-link involves residue lysine 25. 3 consecutive MYM-type zinc fingers follow at residues glutamine 110–valine 148, lysine 160–valine 203, and histidine 210–leucine 245. Lysine 284 is covalently cross-linked (Glycyl lysine isopeptide (Lys-Gly) (interchain with G-Cter in SUMO2)). Residues glutamate 300–serine 331 form an MYM-type 4 zinc finger. Over residues lysine 385–alanine 396 the composition is skewed to polar residues. Residues lysine 385–serine 413 form a disordered region. Low complexity predominate over residues serine 397 to serine 413. The TTF-type zinc finger occupies lysine 452–aspartate 538.

It localises to the nucleus. The protein is Zinc finger MYM-type protein 1 (ZMYM1) of Homo sapiens (Human).